The sequence spans 268 residues: 3-deoxy-manno-octulosonate cytidylyltransferase (268 aa).

Belongs to the KdsB family.

The protein resides in the cytoplasm. The catalysed reaction is 3-deoxy-alpha-D-manno-oct-2-ulosonate + CTP = CMP-3-deoxy-beta-D-manno-octulosonate + diphosphate. It functions in the pathway nucleotide-sugar biosynthesis; CMP-3-deoxy-D-manno-octulosonate biosynthesis; CMP-3-deoxy-D-manno-octulosonate from 3-deoxy-D-manno-octulosonate and CTP: step 1/1. It participates in bacterial outer membrane biogenesis; lipopolysaccharide biosynthesis. Activates KDO (a required 8-carbon sugar) for incorporation into bacterial lipopolysaccharide in Gram-negative bacteria. The sequence is that of 3-deoxy-manno-octulosonate cytidylyltransferase from Psychrobacter cryohalolentis (strain ATCC BAA-1226 / DSM 17306 / VKM B-2378 / K5).